Reading from the N-terminus, the 506-residue chain is WD repeat-containing protein 55 homolog (506 aa).

The segment covering 1 to 11 (MHRHDCFKTPA) has biased composition (basic and acidic residues). Disordered regions lie at residues 1 to 20 (MHRHDCFKTPADEDELDDID), 33 to 87 (QEVL…SDDS), and 100 to 132 (AKRRKEQNAMDGAEPSGSGPSGSGDYSHLDEDD). Positions 33–48 (QEVLNESESDDDEYDL) are enriched in acidic residues. The span at 61–74 (GNISSNESISSDGS) shows a compositional bias: low complexity. Residues 78–87 (NAEDTDSDDS) show a composition bias toward acidic residues. WD repeat units lie at residues 156–195 (RLEDFITDICFHPERDIIALATIIGDVHLYEYGNEENKLL), 200–239 (VHAKACRDVEFTEDGRSLITCSKDKCVMVTDMETEKLKKL), 243–281 (AHDDAINKLHVLDERLFATGDDAGTVKLWDFRTKDAIFE), 284–323 (EVEDQITQMLTNEQNKLLLATSADGYLTTFNIGARKLYVQ), 326–365 (PYEEELNCMGIYRGSSKLVVGTSKGRLYTYNWGYFGYHCD), and 410–449 (QHNMPIESLDINSSGELLASSSHNNDVRFWNVKYFEDFGD). Positions 480 to 506 (DMTKEQDDDDNDDGGNNTTAAGSNNVT) are disordered. A compositionally biased stretch (low complexity) spans 493–506 (GGNNTTAAGSNNVT).

Belongs to the WD repeat WDR55 family.

The protein is WD repeat-containing protein 55 homolog of Drosophila mojavensis (Fruit fly).